A 143-amino-acid chain; its full sequence is 3-dehydroquinate dehydratase (143 aa).

Y21 serves as the catalytic Proton acceptor. N73, H79, and D86 together coordinate substrate. The active-site Proton donor is the H99. Substrate is bound by residues 100-101 (IS) and R110.

It belongs to the type-II 3-dehydroquinase family. As to quaternary structure, homododecamer.

It catalyses the reaction 3-dehydroquinate = 3-dehydroshikimate + H2O. The protein operates within metabolic intermediate biosynthesis; chorismate biosynthesis; chorismate from D-erythrose 4-phosphate and phosphoenolpyruvate: step 3/7. In terms of biological role, catalyzes a trans-dehydration via an enolate intermediate. The sequence is that of 3-dehydroquinate dehydratase from Deinococcus radiodurans (strain ATCC 13939 / DSM 20539 / JCM 16871 / CCUG 27074 / LMG 4051 / NBRC 15346 / NCIMB 9279 / VKM B-1422 / R1).